A 232-amino-acid polypeptide reads, in one-letter code: Protein FAM246B (232 aa).

A compositionally biased stretch (basic and acidic residues) spans 19 to 31 (EVLRRVTGRRRDP). 4 disordered regions span residues 19-47 (EVLRRVTGRRRDPGPQSNGPGREDARAPG), 80-101 (AAGAGERTGAHSRGSVCSVCGE), 151-179 (ALLPPPPPSPPARREPRAVPRAAPRGPTL), and 191-232 (AASR…GGGD). Basic residues predominate over residues 211–220 (APARKNHKKM).

Belongs to the FAM246 family.

The polypeptide is Protein FAM246B (Homo sapiens (Human)).